The sequence spans 125 residues: Holo-[acyl-carrier-protein] synthase (125 aa).

Residues Asp-8 and Glu-57 each coordinate Mg(2+).

This sequence belongs to the P-Pant transferase superfamily. AcpS family. It depends on Mg(2+) as a cofactor.

It localises to the cytoplasm. The enzyme catalyses apo-[ACP] + CoA = holo-[ACP] + adenosine 3',5'-bisphosphate + H(+). Functionally, transfers the 4'-phosphopantetheine moiety from coenzyme A to a Ser of acyl-carrier-protein. The polypeptide is Holo-[acyl-carrier-protein] synthase (Neisseria meningitidis serogroup C (strain 053442)).